Here is an 80-residue protein sequence, read N- to C-terminus: Serine palmitoyltransferase small subunit A-A (80 aa).

Residues 1–21 lie on the Cytoplasmic side of the membrane; that stretch reads MKVLCEDVNGPRSSLGRAWSH. Residues 22–38 form a helical membrane-spanning segment; sequence MSWLYYQYLLVTALYML. The Lumenal segment spans residues 39–43; it reads EPWER. The helical transmembrane segment at 44-66 threads the bilayer; the sequence is TVFNSMLVSIVGMALYTGYIFMP. The Cytoplasmic segment spans residues 67–80; the sequence is QHILAILHYFEIVQ.

This sequence belongs to the SPTSS family. SPTSSA subfamily. Component of the serine palmitoyltransferase (SPT) complex, which is composed of SPTLC1, SPTLC2 or SPTLC3 and SPTSSA or SPTSSB. The heterodimer consisting of SPTLC1 and SPTLC2/SPTLC3 forms the catalytic core of the enzyme, while SPTSSA or SPTSSB subunits determine substrate specificity. SPT also interacts with ORMDL proteins, especially ORMDL3, which negatively regulate SPT activity in the presence of ceramides.

The protein localises to the endoplasmic reticulum membrane. It functions in the pathway lipid metabolism; sphingolipid metabolism. Its function is as follows. Component of the serine palmitoyltransferase multisubunit enzyme (SPT) that catalyzes the initial and rate-limiting step in sphingolipid biosynthesis by condensing L-serine and activated acyl-CoA (most commonly palmitoyl-CoA) to form long-chain bases. The SPT complex is composed of SPTLC1, SPTLC2 or SPTLC3 and SPTSSA or SPTSSB. Within this complex, the heterodimer consisting of SPTLC1 and SPTLC2/SPTLC3 forms the catalytic core. Within the SPT complex, SPTSSA stimulates the catalytic activity and plays a role in substrate specificity, which depends upon the overall complex composition. The SPTLC1-SPTLC2-SPTSSA complex shows a strong preference for C16-CoA substrate, while the SPTLC1-SPTLC3-SPTSSA isozyme uses both C14-CoA and C16-CoA as substrates, with a slight preference for C14-CoA. Independently of its action as a SPT component, may be involved in MBOAT7 localization to mitochondria-associated membranes, a membrane bridge between the endoplasmic reticulum and mitochondria, may hence affect MBOAT7-catalyzed incorporation of arachidonic acid into phosphatidylinositol. This Xenopus laevis (African clawed frog) protein is Serine palmitoyltransferase small subunit A-A (sptssa-a).